Reading from the N-terminus, the 268-residue chain is Glucosamine-6-phosphate deaminase (268 aa).

The Proton acceptor; for enolization step role is filled by Asp72. Catalysis depends on Asp141, which acts as the For ring-opening step. Catalysis depends on His143, which acts as the Proton acceptor; for ring-opening step. Glu148 acts as the For ring-opening step in catalysis.

It belongs to the glucosamine/galactosamine-6-phosphate isomerase family. NagB subfamily.

It catalyses the reaction alpha-D-glucosamine 6-phosphate + H2O = beta-D-fructose 6-phosphate + NH4(+). Its pathway is amino-sugar metabolism; N-acetylneuraminate degradation; D-fructose 6-phosphate from N-acetylneuraminate: step 5/5. Its activity is regulated as follows. Allosterically activated by N-acetylglucosamine 6-phosphate (GlcNAc6P). In terms of biological role, catalyzes the reversible isomerization-deamination of glucosamine 6-phosphate (GlcN6P) to form fructose 6-phosphate (Fru6P) and ammonium ion. This Borrelia garinii subsp. bavariensis (strain ATCC BAA-2496 / DSM 23469 / PBi) (Borreliella bavariensis) protein is Glucosamine-6-phosphate deaminase.